The chain runs to 454 residues: Replicative DNA helicase DnaC (454 aa).

The SF4 helicase domain occupies R179–F445. A210–T217 lines the ATP pocket.

It belongs to the helicase family. DnaB subfamily. The DNA replisome assembles sequentially on oriC in this order; DnaA, DnaD, DnaB, DnaI-DnaC helicase. Monomer in the absence of ATP, in its presence forms a probable homohexamer which is not active as a helicase in vitro. Interacts separately and simultaneously with helicase loaders DnaB and DnaI. Interaction with DnaB does not require ATP. Interaction with DnaI requires ATP, probably forms a DnaC(6):DnaI(6) complex, which is not active as a helicase.

It localises to the cytoplasm. The protein localises to the nucleoid. It catalyses the reaction Couples ATP hydrolysis with the unwinding of duplex DNA at the replication fork by translocating in the 5'-3' direction. This creates two antiparallel DNA single strands (ssDNA). The leading ssDNA polymer is the template for DNA polymerase III holoenzyme which synthesizes a continuous strand.. The enzyme catalyses ATP + H2O = ADP + phosphate + H(+). In terms of biological role, the main replicative DNA helicase, it participates in initiation and elongation during chromosome replication. Travels ahead of the DNA replisome, separating dsDNA into templates for DNA synthesis. The monomer has helicase activity in the presence of DnaI which is further increased by DnaB; the purified oligomeric form (probably a DnaC hexamer) does not have helicase activity in vitro, nor does the DnaC(6):DnaI(6) complex. The direction was not determined but is probably 5'-3'. Helicase activity requires an rNTP and is inactive with dNTPs. Has weak ATPase activity as a monomer, as an oligomer has ATPase activity which is stimulated by single-stranded (ss)DNA and further stimulated by DnaI and more by DnaB. Functionally, deletion of a single T residue in the promoter region (a run of 8 Ts becomes 7 Ts) decreases the helicase levels by 50%, decreasing DNA replication inititation during fast growth in rich medium. Suppresses the synthetic lethality of a dnaA1-yabA deletion for growth on rich medium. This chain is Replicative DNA helicase DnaC, found in Bacillus subtilis (strain 168).